The chain runs to 87 residues: Kappa-bungarotoxin (87 aa).

A signal peptide spans 1 to 21 (MKTLLLTLVVVTIVCLDLGYT). 5 disulfide bridges follow: cysteine 24/cysteine 42, cysteine 35/cysteine 63, cysteine 48/cysteine 52, cysteine 67/cysteine 79, and cysteine 80/cysteine 85.

It belongs to the three-finger toxin family. Long-chain subfamily. Kappa-neurotoxin sub-subfamily. In terms of assembly, homodimer and heterodimer; non-covalently linked. Expressed by the venom gland.

The protein resides in the secreted. Functionally, postsynaptic neurotoxin that binds and inhibits neuronal nicotinic acetylcholine receptors (nAChR) with high affinity (IC(50)&lt;100 nM). Is a selective, and slowly reversible antagonist of alpha-3/CHRNA3-containing and some alpha-4/CHRNA4-containing AChRs. The polypeptide is Kappa-bungarotoxin (Bungarus multicinctus (Many-banded krait)).